Here is a 293-residue protein sequence, read N- to C-terminus: Ribosomal RNA small subunit methyltransferase A (293 aa).

Residues Asn38, Val40, Gly65, Glu86, Asp116, and Asn135 each coordinate S-adenosyl-L-methionine.

The protein belongs to the class I-like SAM-binding methyltransferase superfamily. rRNA adenine N(6)-methyltransferase family. RsmA subfamily.

The protein resides in the cytoplasm. The catalysed reaction is adenosine(1518)/adenosine(1519) in 16S rRNA + 4 S-adenosyl-L-methionine = N(6)-dimethyladenosine(1518)/N(6)-dimethyladenosine(1519) in 16S rRNA + 4 S-adenosyl-L-homocysteine + 4 H(+). In terms of biological role, specifically dimethylates two adjacent adenosines (A1518 and A1519) in the loop of a conserved hairpin near the 3'-end of 16S rRNA in the 30S particle. May play a critical role in biogenesis of 30S subunits. The polypeptide is Ribosomal RNA small subunit methyltransferase A (Nocardia farcinica (strain IFM 10152)).